The sequence spans 189 residues: Elongation factor P (189 aa).

This sequence belongs to the elongation factor P family.

Its subcellular location is the cytoplasm. It participates in protein biosynthesis; polypeptide chain elongation. Involved in peptide bond synthesis. Stimulates efficient translation and peptide-bond synthesis on native or reconstituted 70S ribosomes in vitro. Probably functions indirectly by altering the affinity of the ribosome for aminoacyl-tRNA, thus increasing their reactivity as acceptors for peptidyl transferase. The polypeptide is Elongation factor P (Ehrlichia ruminantium (strain Gardel)).